The following is a 427-amino-acid chain: ATP-sensitive inward rectifier potassium channel 12 (427 aa).

Residues 1–77 (MTASGRTNPY…LADMFTTCVD (77 aa)) lie on the Cytoplasmic side of the membrane. At Cys75 the chain carries S-nitrosocysteine. A helical membrane pass occupies residues 78 to 104 (IRWRYMLLIFSLAFLASWLLFGVIFWV). Residues Arg79 and Arg81 each coordinate a 1,2-diacyl-sn-glycero-3-phospho-(1D-myo-inositol-4,5-bisphosphate). Residues 105 to 129 (IAVAHGDLEPAEAHGRTPCVLQVHG) lie on the Extracellular side of the membrane. A disulfide bridge connects residues Cys123 and Cys155. An intramembrane region (helical; Pore-forming) is located at residues 130-146 (FMAAFLFSIETQTTIGY). Residues Thr143, Ile144, Gly145, and Tyr146 each contribute to the K(+) site. The short motif at 143 to 148 (TIGYGL) is the Selectivity filter element. The Extracellular portion of the chain corresponds to 147–155 (GLRCVTEEC). The chain crosses the membrane as a helical span at residues 156–183 (PVAVFMVVAQSIVGCIIDSFMIGAIMAK). Positions 183 and 188 each coordinate a 1,2-diacyl-sn-glycero-3-phospho-(1D-myo-inositol-4,5-bisphosphate). The Cytoplasmic portion of the chain corresponds to 184-427 (MARPKKRAQT…QRPYRRESEI (244 aa)). The span at 387–396 (DEEDEVDGEQ) shows a compositional bias: acidic residues. The segment at 387-427 (DEEDEVDGEQDSLGPQARRDFDRPQAGTALEQRPYRRESEI) is disordered. Residues 425–427 (SEI) carry the PDZ-binding motif.

The protein belongs to the inward rectifier-type potassium channel (TC 1.A.2.1) family. KCNJ12 subfamily. Homotetramer. Forms heteromer with KCNJ4. Association, via its PDZ-recognition domain, with LIN7A, LIN7B, LIN7C, DLG1, CASK and APBA1 plays a key role in its localization and trafficking.

The protein localises to the membrane. It catalyses the reaction K(+)(in) = K(+)(out). With respect to regulation, activated by phosphatidylinositol 4,5-biphosphate (PtdIns(4,5)P2). PtdIns(4,5)P2 binding to the cytoplasmic side of the channel triggers a conformation change leading to channel opening. Inward rectifying potassium channel that probably participates in controlling the resting membrane potential in electrically excitable cells. Probably participates in establishing action potential waveform and excitability of neuronal and muscle tissues. Inward rectifier potassium channels are characterized by a greater tendency to allow potassium to flow into the cell rather than out of it. Their voltage dependence is regulated by the concentration of extracellular potassium; as external potassium is raised, the voltage range of the channel opening shifts to more positive voltages. The inward rectification is mainly due to the blockage of outward current by internal magnesium. The protein is ATP-sensitive inward rectifier potassium channel 12 (KCNJ12) of Bos taurus (Bovine).